A 1153-amino-acid chain; its full sequence is Nitric oxide synthase, inducible (1153 aa).

The DINNN-motif; mediates interaction with SPSB1, SPSB2 and SPSB4 motif lies at 23–27 (DINNN). Residues cysteine 110 and cysteine 115 each coordinate Zn(2+). Serine 118 contacts (6R)-L-erythro-5,6,7,8-tetrahydrobiopterin. Cysteine 200 is a binding site for heme b. Phosphoserine; by PKA is present on serine 234. Residues glutamine 263, tryptophan 372, tyrosine 373, and glutamate 377 each contribute to the L-arginine site. 4 residues coordinate (6R)-L-erythro-5,6,7,8-tetrahydrobiopterin: arginine 381, isoleucine 462, tryptophan 463, and phenylalanine 476. Tyrosine 491 is a binding site for heme b. The tract at residues 515–535 (LKVLVKAVLFACMLMRKTMAS) is calmodulin-binding. A Flavodoxin-like domain is found at 539–677 (VTILFATETG…AFRSWAVQTF (139 aa)). FMN contacts are provided by threonine 545, glutamate 546, threonine 547, lysine 549, and serine 550. Tyrosine 575 bears the Phosphotyrosine mark. Serine 578 is subject to Phosphoserine; by PKA. FMN is bound by residues serine 591, threonine 592, serine 628, arginine 633, cysteine 635, glutamate 661, and glutamine 665. The FAD-binding FR-type domain occupies 730–970 (KNVFTMRLKS…VRNASGFHLP (241 aa)). An NADP(+)-binding site is contributed by arginine 750. Residue histidine 772 coordinates FAD. Serine 892 is subject to Phosphoserine; by PKA. FAD is bound by residues arginine 906, tyrosine 908, serine 909, threonine 924, and alanine 926. Threonine 929 serves as a coordination point for NADP(+). The FAD site is built by tyrosine 930, valine 943, cysteine 944, and serine 945. The NADP(+) site is built by threonine 984, arginine 1017, serine 1046, arginine 1047, lysine 1053, tyrosine 1055, glutamine 1057, and aspartate 1090.

The protein belongs to the NOS family. Homodimer. Interacts with NHERF1. Interacts with GAPDH; induced by oxidatively-modified low-densitity lipoprotein (LDL(ox)). Interacts with S100A8 and S100A9 to form the iNOS-S100A8/9 transnitrosylase complex. Interacts with SPSB1, SPSB2 and SPSB4. Interacts with ELOC and CUL5 in the presence of SPSB1 or SPSB2 or SPSB4. Forms a complex with ASL, ASS1 and HSP90AA1; the complex regulates cell-autonomous L-arginine synthesis and citrulline recycling while channeling extracellular L-arginine to nitric oxide synthesis pathway. Requires heme b as cofactor. FAD serves as cofactor. The cofactor is FMN. It depends on (6R)-L-erythro-5,6,7,8-tetrahydrobiopterin as a cofactor. Post-translationally, polyubiquitinated; mediated by SPSB1, SPSB2 and SPSB4, leading to proteasomal degradation. Expressed in the liver, retina, bone cells and airway epithelial cells of the lung. Not expressed in the platelets. Expressed in chondrocytes.

The protein resides in the cytoplasm. Its subcellular location is the cytosol. The catalysed reaction is 2 L-arginine + 3 NADPH + 4 O2 + H(+) = 2 L-citrulline + 2 nitric oxide + 3 NADP(+) + 4 H2O. With respect to regulation, regulated by calcium/calmodulin. Aspirin inhibits expression and function of this enzyme and effects may be exerted at the level of translational/post-translational modification and directly on the catalytic activity. In terms of biological role, produces nitric oxide (NO) which is a messenger molecule with diverse functions throughout the body. In macrophages, NO mediates tumoricidal and bactericidal actions. Also has nitrosylase activity and mediates cysteine S-nitrosylation of cytoplasmic target proteins such PTGS2/COX2. As component of the iNOS-S100A8/9 transnitrosylase complex involved in the selective inflammatory stimulus-dependent S-nitrosylation of GAPDH on 'Cys-247' implicated in regulation of the GAIT complex activity and probably multiple targets including ANXA5, EZR, MSN and VIM. Involved in inflammation, enhances the synthesis of pro-inflammatory mediators such as IL6 and IL8. This Homo sapiens (Human) protein is Nitric oxide synthase, inducible.